The sequence spans 654 residues: APC membrane recruitment protein 2 (654 aa).

Disordered regions lie at residues 1–105 (MEVQ…TAPL), 224–289 (ECGN…QSEQ), 316–369 (IIAD…PQVS), and 381–654 (PAHQ…QSRK). Pro residues predominate over residues 9 to 18 (EPPPCDPQPP). A compositionally biased stretch (basic and acidic residues) spans 60 to 70 (ELVRSKTHDGL). Basic and acidic residues predominate over residues 427 to 454 (PQKDEDSPAPRRAEPVLHHAPARLEKRP). Residues 468–479 (SGSSKTGKQQPS) show a composition bias toward polar residues. Residues 565–575 (SPKCSSSATSS) show a composition bias toward low complexity. Residues 576-586 (FRSMKGSTSLP) show a composition bias toward polar residues. Over residues 601-621 (SHSSSQGALSSNLSPTSTTPP) the composition is skewed to low complexity. Over residues 644–654 (GKSTSTSQSRK) the composition is skewed to polar residues.

The protein belongs to the Amer family.

It is found in the cell membrane. In terms of biological role, negative regulator of the canonical Wnt signaling pathway involved in neuroectodermal patterning. Acts by specifically binding phosphatidylinositol 4,5-bisphosphate (PtdIns(4,5)P2), translocating to the cell membrane and interacting with key regulators of the canonical Wnt signaling pathway, such as components of the beta-catenin destruction complex. The protein is APC membrane recruitment protein 2 (amer2) of Danio rerio (Zebrafish).